Here is a 498-residue protein sequence, read N- to C-terminus: MHPDLTERILQHLETTDKADTLDLAALFAEDHQKIVGSLKSIQAHGELVTAETVTHKSLGLTDEGRAVVENGSHEALVYDLVPPEGIAQAALMAAGGANAKVGFSKAMSHGWILVDKSVTPPLVRRKVDTITDVVRNQLQQVALGKGDQLPAKEVADFKKRKLLQETTTKSFVLARGPEFATTLTKLETDLTVEMLANGLWDQLKFKAYNFDALGAPPTRGHLHPLLKVRTEFRQIFLEMGFSEMPTNNYVESSFWNFDALYQPQQHPARDAHDTFFVNHPAKSHKFPQDYLERVKKVHSVGGYGSKGYGYDWKLEEAQKNLLRTHTTAVSARMLYKLANQEGGFKAAKYFSIDKVFRNETLDATHLAEFHQVEGVIADVGLTLGDLIGTLYEFFRKLGITQLEFKPAYNPYTEPSMEIFCYHPGLAKWIEVGNSGVFRPEMLLPMGLPENVNVIAWGLSLERPTMIKYGINNIRDLVGPKVDLKMVEEGPICRLDHA.

L-phenylalanine is bound by residues Thr-328, 372-374 (QVE), and Tyr-412. Glu-414 contacts Mg(2+). Phe-438 is an L-phenylalanine binding site.

This sequence belongs to the class-II aminoacyl-tRNA synthetase family. Phe-tRNA synthetase alpha subunit type 2 subfamily. In terms of assembly, tetramer of two alpha and two beta subunits. Mg(2+) is required as a cofactor.

The protein localises to the cytoplasm. It carries out the reaction tRNA(Phe) + L-phenylalanine + ATP = L-phenylalanyl-tRNA(Phe) + AMP + diphosphate + H(+). The polypeptide is Phenylalanine--tRNA ligase alpha subunit (Drosophila melanogaster (Fruit fly)).